Here is a 283-residue protein sequence, read N- to C-terminus: 4-diphosphocytidyl-2-C-methyl-D-erythritol kinase (283 aa).

The active site involves K10. An ATP-binding site is contributed by 99 to 109; the sequence is PMGGGLGGGSS. Residue D141 is part of the active site.

It belongs to the GHMP kinase family. IspE subfamily. In terms of assembly, homodimer.

The enzyme catalyses 4-CDP-2-C-methyl-D-erythritol + ATP = 4-CDP-2-C-methyl-D-erythritol 2-phosphate + ADP + H(+). It participates in isoprenoid biosynthesis; isopentenyl diphosphate biosynthesis via DXP pathway; isopentenyl diphosphate from 1-deoxy-D-xylulose 5-phosphate: step 3/6. Catalyzes the phosphorylation of the position 2 hydroxy group of 4-diphosphocytidyl-2C-methyl-D-erythritol. This is 4-diphosphocytidyl-2-C-methyl-D-erythritol kinase from Escherichia coli (strain 55989 / EAEC).